Consider the following 173-residue polypeptide: Crossover junction endodeoxyribonuclease RuvC (173 aa).

Active-site residues include Asp-8, Glu-67, and Asp-139. 3 residues coordinate Mg(2+): Asp-8, Glu-67, and Asp-139.

It belongs to the RuvC family. In terms of assembly, homodimer which binds Holliday junction (HJ) DNA. The HJ becomes 2-fold symmetrical on binding to RuvC with unstacked arms; it has a different conformation from HJ DNA in complex with RuvA. In the full resolvosome a probable DNA-RuvA(4)-RuvB(12)-RuvC(2) complex forms which resolves the HJ. The cofactor is Mg(2+).

The protein localises to the cytoplasm. The catalysed reaction is Endonucleolytic cleavage at a junction such as a reciprocal single-stranded crossover between two homologous DNA duplexes (Holliday junction).. In terms of biological role, the RuvA-RuvB-RuvC complex processes Holliday junction (HJ) DNA during genetic recombination and DNA repair. Endonuclease that resolves HJ intermediates. Cleaves cruciform DNA by making single-stranded nicks across the HJ at symmetrical positions within the homologous arms, yielding a 5'-phosphate and a 3'-hydroxyl group; requires a central core of homology in the junction. The consensus cleavage sequence is 5'-(A/T)TT(C/G)-3'. Cleavage occurs on the 3'-side of the TT dinucleotide at the point of strand exchange. HJ branch migration catalyzed by RuvA-RuvB allows RuvC to scan DNA until it finds its consensus sequence, where it cleaves and resolves the cruciform DNA. This is Crossover junction endodeoxyribonuclease RuvC from Shewanella amazonensis (strain ATCC BAA-1098 / SB2B).